A 426-amino-acid polypeptide reads, in one-letter code: C4-dicarboxylate transport protein (426 aa).

8 consecutive transmembrane segments (helical) span residues serine 4–glycine 24, leucine 44–methionine 64, isoleucine 76–valine 96, isoleucine 142–phenylalanine 162, valine 184–methionine 204, leucine 222–alanine 242, isoleucine 326–valine 346, and isoleucine 352–isoleucine 372.

The protein belongs to the dicarboxylate/amino acid:cation symporter (DAACS) (TC 2.A.23) family.

The protein resides in the cell inner membrane. In terms of biological role, responsible for the transport of dicarboxylates such as succinate, fumarate, and malate from the periplasm across the membrane. This Edwardsiella ictaluri (strain 93-146) protein is C4-dicarboxylate transport protein.